Reading from the N-terminus, the 65-residue chain is Myotoxin-1 (65 aa).

A signal peptide spans 1–22; it reads MKILYLLFAFLFLAFLSEPGNA. 3 disulfide bridges follow: Cys-26-Cys-58, Cys-33-Cys-52, and Cys-40-Cys-59.

The protein belongs to the crotamine-myotoxin family. In terms of assembly, monomer. As to expression, expressed by the venom gland.

Its subcellular location is the secreted. Its function is as follows. Cationic peptide that possesses multiple functions. It acts as a cell-penetrating peptide (CPP), and as a potent voltage-gated potassium channel (Kv) inhibitor. It exhibits antimicrobial activities, hind limb paralysis, and severe muscle necrosis by a non-enzymatic mechanism. In Crotalus durissus terrificus (South American rattlesnake), this protein is Myotoxin-1.